Consider the following 523-residue polypeptide: Probable 3-ketoacyl-CoA synthase 20 (523 aa).

The next 2 helical transmembrane spans lie at 31–55 (IVAV…AAGG) and 78–96 (ALAV…YAAS). Residues 93-382 (YAASRPRPVY…RFLATVVLKR (290 aa)) form the FAE domain. Active-site residues include Cys237, His317, His401, His405, and Asn438.

Belongs to the thiolase-like superfamily. Chalcone/stilbene synthases family. As to expression, highly expressed in leaf sheaths. Expressed in leaves, flag leaves and panicles.

The protein localises to the membrane. The catalysed reaction is a very-long-chain acyl-CoA + malonyl-CoA + H(+) = a very-long-chain 3-oxoacyl-CoA + CO2 + CoA. Functionally, contributes to fatty acids elongation. Plays a role in controlling leaf anatomy and plant architecture. The sequence is that of Probable 3-ketoacyl-CoA synthase 20 from Oryza sativa subsp. japonica (Rice).